Reading from the N-terminus, the 63-residue chain is Large ribosomal subunit protein bL28 (63 aa).

Belongs to the bacterial ribosomal protein bL28 family.

This is Large ribosomal subunit protein bL28 from Syntrophotalea carbinolica (strain DSM 2380 / NBRC 103641 / GraBd1) (Pelobacter carbinolicus).